The chain runs to 104 residues: Large ribosomal subunit protein uL24 (104 aa).

It belongs to the universal ribosomal protein uL24 family. As to quaternary structure, part of the 50S ribosomal subunit.

One of two assembly initiator proteins, it binds directly to the 5'-end of the 23S rRNA, where it nucleates assembly of the 50S subunit. Functionally, one of the proteins that surrounds the polypeptide exit tunnel on the outside of the subunit. The polypeptide is Large ribosomal subunit protein uL24 (Enterobacter sp. (strain 638)).